We begin with the raw amino-acid sequence, 330 residues long: NADH-quinone oxidoreductase subunit H (330 aa).

A run of 8 helical transmembrane segments spans residues 5 to 25 (LLTL…VLTL), 78 to 98 (WVFM…FAVI), 120 to 140 (IGLL…ALGG), 155 to 175 (AMAQ…PVVM), 191 to 211 (SLPN…AIMA), 243 to 263 (FFVG…VLFL), 271 to 291 (LPGI…FIWV), and 308 to 328 (WKIL…WLIW).

It belongs to the complex I subunit 1 family. As to quaternary structure, NDH-1 is composed of 14 different subunits. Subunits NuoA, H, J, K, L, M, N constitute the membrane sector of the complex.

It localises to the cell inner membrane. The enzyme catalyses a quinone + NADH + 5 H(+)(in) = a quinol + NAD(+) + 4 H(+)(out). Its function is as follows. NDH-1 shuttles electrons from NADH, via FMN and iron-sulfur (Fe-S) centers, to quinones in the respiratory chain. The immediate electron acceptor for the enzyme in this species is believed to be ubiquinone. Couples the redox reaction to proton translocation (for every two electrons transferred, four hydrogen ions are translocated across the cytoplasmic membrane), and thus conserves the redox energy in a proton gradient. This subunit may bind ubiquinone. This Syntrophotalea carbinolica (strain DSM 2380 / NBRC 103641 / GraBd1) (Pelobacter carbinolicus) protein is NADH-quinone oxidoreductase subunit H.